Consider the following 930-residue polypeptide: Protocadherin gamma-A4 (930 aa).

Residues 1–27 (MAAPYKSDRRGLIWICIFLGSLCDIRA) form the signal peptide. Cadherin domains lie at 28–132 (EQIR…APSF), 133–241 (GAQQ…APVF), 242–346 (TQPE…APEV), 347–451 (TVTS…PPTF), 452–561 (THAS…TPEI), and 569–682 (DGST…APID). Over 28–691 (EQIRYSVPEE…DQEDSDITLY (664 aa)) the chain is Extracellular. N-linked (GlcNAc...) asparagine glycans are attached at residues Asn418 and Asn544. Residues 692 to 712 (LVVAVAAVSCVFLAFVIVLLI) traverse the membrane as a helical segment. The Cytoplasmic portion of the chain corresponds to 713 to 930 (HRLRRWHSTR…KKKSGKKEKK (218 aa)). 2 disordered regions span residues 803 to 839 (SSLQ…WPNN) and 900 to 930 (ATLT…KEKK). A compositionally biased stretch (basic residues) spans 920–930 (NKKKSGKKEKK).

The protein resides in the cell membrane. In terms of biological role, potential calcium-dependent cell-adhesion protein. May be involved in the establishment and maintenance of specific neuronal connections in the brain. This Mus musculus (Mouse) protein is Protocadherin gamma-A4.